We begin with the raw amino-acid sequence, 1242 residues long: Reverse gyrase 1 (1242 aa).

Residues 6–46 form an RG N-terminal-type zinc finger; the sequence is KVPPSIYTRSCPNCGGNISSQRLFNGSVCESCLKDDREFSN. 4 residues coordinate Zn(2+): Cys16, Cys19, Cys34, and Cys37. Residues Gln93 and 110 to 117 contribute to the ATP site; that span reads APPGLGKT. In terms of domain architecture, Helicase ATP-binding spans 97–298; sequence TIRFLRGESF…SLMGFRPGSS (202 aa). The DEAD box signature appears at 214–217; it reads DDVD. The segment at 615–1242 is topoisomerase I; sequence LSVKTTLFIV…ELYNEIQTIS (628 aa). The region spanning 619–785 is the Toprim domain; the sequence is TTLFIVESPN…NIKRAEFHEV (167 aa). Glu625 provides a ligand contact to Mg(2+). The RG C-terminal-type; atypical zinc finger occupies 703–731; it reads IKKCEKGHQIVKDLSQNKCPICGSRIVTD. Residues Cys706, His710, Cys721, and Cys724 each coordinate Zn(2+). A Mg(2+)-binding site is contributed by Asp754. The Topo IA-type catalytic domain maps to 801–1242; that stretch reads NDNLVKSQIV…ELYNEIQTIS (442 aa). The active-site O-(5'-phospho-DNA)-tyrosine intermediate is the Tyr965.

It in the N-terminal section; belongs to the DEAD box helicase family. DDVD subfamily. In the C-terminal section; belongs to the type IA topoisomerase family. In terms of assembly, monomer. It depends on Zn(2+) as a cofactor. Mg(2+) is required as a cofactor.

It localises to the cytoplasm. The catalysed reaction is ATP + H2O = ADP + phosphate + H(+). With respect to regulation, at least one of the two reverse gyrase proteins is inhibited by actinomycin D. Highly sensitive to NaCl concentrations, maximal positive supercoiling is observed with 10 mM NaCl; as NaCl rises, supercoiling decreases. At 300 mM NaCl relaxes but does not introduce positive supercoils into negatively supercoiled substrate, at 400 mM NaCl does not relax DNA. Its function is as follows. Modifies the topological state of DNA by introducing positive supercoils in an ATP-dependent process. Increases the linking number in steps of +1. Involved in homeostatic control of DNA topology in balance with type II topoisomerase 6 (TopoVI); levels of TopoVI are constant at 80 and 88 degrees Celsius and TopoVI is probably less active at 88 degrees (characterized enzyme is from S.shibatae B12), so reverse gyrase mediates most of the fine-tuning of DNA topology. Changes the DNA linking number step-by-step in a distributive manner. At low protein to DNA ratios mostly relaxes negatively supercoiled substrate, as ratios rise more positive supercoils are introduced. At 90 degrees Celsius introduces 19 positive supercoils into pTZ18R DNA (probably 2860 bp), less than TopR2. Relaxes negatively supercoiled DNA in the absence of ATP. It cleaves transiently a single DNA strand and remains covalently bound to the 5' DNA end through a tyrosine residue. May be involved in DNA damage response. Its activity is inhibited by the DNA-binding protein 7d (Sso7d), suggesting that the Sso7d activity might counteract the overwinding effect of reverse gyrase. Resolves 4-way Holliday junctions (HJ) with 20 bases in each arm in vitro, distorting the junction. Very high protein levels are required, but total enzyme content of the cell (there are 2 reverse gyrases in this organism) is estimated to be 20-200 molecules/cell. HJ resolution does not require either ATPase activity or the active tyrosine. The individual domains do not resolve HJs but do so when mixed. Also unwinds a fork substrate. In terms of biological role, there are 2 genes for this protein in the cell. During exponential growth this is the less expressed isoform (about 52 molecules per cell at 80 degrees Celsius, about 28 molecules at 88 degrees Celsius); this isoform is more active at higher temperature. Grows actively at both 80 and 88 degrees Celsius; survives a long exposure at 45 degrees Celsius without DNA replication or cell division occurring. Experiments using whole cell extracts do not distinguish which isoform is present, the results are probably a mixture of the two forms. The polypeptide is Reverse gyrase 1 (Saccharolobus solfataricus (strain ATCC 35092 / DSM 1617 / JCM 11322 / P2) (Sulfolobus solfataricus)).